The following is a 399-amino-acid chain: Acetate kinase 2 (399 aa).

Asparagine 10 provides a ligand contact to Mg(2+). ATP is bound at residue lysine 17. Arginine 89 serves as a coordination point for substrate. Catalysis depends on aspartate 146, which acts as the Proton donor/acceptor. Residues 206–210 (HLGNG), 281–283 (DCR), and 329–333 (GIGEN) contribute to the ATP site. Glutamate 384 lines the Mg(2+) pocket.

It belongs to the acetokinase family. Homodimer. Mg(2+) serves as cofactor. It depends on Mn(2+) as a cofactor.

The protein localises to the cytoplasm. It carries out the reaction acetate + ATP = acetyl phosphate + ADP. It participates in metabolic intermediate biosynthesis; acetyl-CoA biosynthesis; acetyl-CoA from acetate: step 1/2. In terms of biological role, catalyzes the formation of acetyl phosphate from acetate and ATP. Can also catalyze the reverse reaction. The sequence is that of Acetate kinase 2 from Neisseria meningitidis serogroup A / serotype 4A (strain DSM 15465 / Z2491).